We begin with the raw amino-acid sequence, 711 residues long: Protein ACTIVITY OF BC1 COMPLEX KINASE 3, chloroplastic (711 aa).

The N-terminal 42 residues, 1–42, are a transit peptide targeting the chloroplast; the sequence is MSLVVGQSLGLTLVGDGLSLRNSKINVGKSKFFSVNRRRLAR. The Protein kinase domain maps to 216-546; the sequence is SVSPEPIAAA…IELLFKDGKF (331 aa). ATP contacts are provided by residues 222 to 230 and K245; that span reads IAAASLGQV. Catalysis depends on D379, which acts as the Proton acceptor.

This sequence belongs to the protein kinase superfamily. ADCK protein kinase family. In terms of assembly, interacts with ABC1K1 in plastoglobules (PG). Interacts with PGM48.

It localises to the plastid. The protein localises to the chloroplast. It is found in the plastoglobule. It carries out the reaction L-seryl-[protein] + ATP = O-phospho-L-seryl-[protein] + ADP + H(+). The catalysed reaction is L-threonyl-[protein] + ATP = O-phospho-L-threonyl-[protein] + ADP + H(+). Kinase that can phosphorylate the tocopherol cyclase VTE1, a key enzyme of tocopherol (vitamin E) metabolism and involved in the recycling of oxidated alpha-tocopherol quinone, possibly stabilizing it at plastoglobules. Also regulates membrane prenylquinone composition. Required for photooxidative stress responses to prevent photosystem II core and chlorophyll degradations. Together with ABC1K1, contributes to plastoglobule (PG) function in prenyl-lipid metabolism, stress response, and thylakoid remodeling. Promotes photodamage of chloroplasts under continuous red light, thus working in opposition to ABC1K1. This Arabidopsis thaliana (Mouse-ear cress) protein is Protein ACTIVITY OF BC1 COMPLEX KINASE 3, chloroplastic.